The chain runs to 522 residues: Occludin (522 aa).

The tract at residues 1–20 (MSSRPLESPPPYRPDEFKPN) is disordered. Over 1–66 (MSSRPLESPP…KWTSPPGVIR (66 aa)) the chain is Cytoplasmic. In terms of domain architecture, MARVEL spans 60–269 (SPPGVIRILS…IIFFAVKTRR (210 aa)). Residues 67–89 (ILSMLIIVMCIAIFACVASTLAW) traverse the membrane as a helical segment. Residues 90 to 135 (DRGYGTSLLGGSVGYPYGGSGFGSYGSGYGYGYGYGYGYGGYTDPR) lie on the Extracellular side of the membrane. The chain crosses the membrane as a helical span at residues 136–160 (AAKGFMLAMAAFCFIAALVIFVTSV). The Cytoplasmic segment spans residues 161 to 170 (IRSEMSRTRR). A helical membrane pass occupies residues 171–195 (YYLSVIIVSAILGIMVFIATIVYIM). Topologically, residues 196–243 (GVNPTAQSSGSLYGSQIYALCNQFYTPAATGLYVDQYLYHYCVVDPQE) are extracellular. A disulfide bond links Cys-216 and Cys-237. The helical transmembrane segment at 244–265 (AIAIVLGFMIIVAFALIIFFAV) threads the bilayer. The Cytoplasmic segment spans residues 266 to 522 (KTRRKMDRYD…MVGDYDRQKT (257 aa)). Ser-302 carries the post-translational modification Phosphoserine. Thr-305 carries the post-translational modification Phosphothreonine. Ser-313, Ser-321, and Ser-340 each carry phosphoserine. The interval 360 to 407 (VDDFRQPRYSSGGNFETPSKRAPAKGRAGRSKRTEQDHYETDYTTGGE) is disordered. A compositionally biased stretch (polar residues) spans 367 to 376 (RYSSGGNFET). The residue at position 368 (Tyr-368) is a Phosphotyrosine. Phosphoserine is present on residues Ser-369 and Ser-370. Residues 381–390 (APAKGRAGRS) show a composition bias toward basic residues. The segment covering 391–400 (KRTEQDHYET) has biased composition (basic and acidic residues). Phosphotyrosine is present on residues Tyr-398 and Tyr-402. Residues Thr-403 and Thr-404 each carry the phosphothreonine; by PKC/PRKCH modification. Ser-408 carries the phosphoserine modification. Residues 414-522 (EDWIREYPPI…MVGDYDRQKT (109 aa)) enclose the OCEL domain. Residues 426–489 (DQQRQLYKRN…EYNRLKQVKG (64 aa)) are a coiled coil. At Ser-490 the chain carries Phosphoserine.

This sequence belongs to the ELL/occludin family. As to quaternary structure, interacts with TJP1/ZO1. Interacts with VAPA. Interacts with CLDN1, CLDN6, CLDN9, CLDN11, CLDN12 and CLDN17. Interacts with PLSCR1. Interacts with LSR, ILDR1 and ILDR2. Interacts with TJP2/ZO2. In terms of processing, dephosphorylated by PTPRJ. The tyrosine phosphorylation on Tyr-398 and Tyr-402 reduces its ability to interact with TJP1. Phosphorylation at Ser-490 also attenuates the interaction with TJP1. Post-translationally, (Microbial infection) Cleaved by S.pyogenes SpeB protease; leading to its degradation. Degradation by SpeB promotes bacterial translocation across the host epithelial barrier. As to expression, localized at tight junctions of both epithelial and endothelial cells. Highly expressed in kidney. Not detected in testis.

The protein localises to the cell membrane. Its subcellular location is the cell junction. It localises to the tight junction. In terms of biological role, may play a role in the formation and regulation of the tight junction (TJ) paracellular permeability barrier. It is able to induce adhesion when expressed in cells lacking tight junctions. Functionally, (Microbial infection) Acts as a coreceptor for hepatitis C virus (HCV) in hepatocytes. This chain is Occludin (OCLN), found in Homo sapiens (Human).